The sequence spans 738 residues: Polyphosphate kinase (738 aa).

Positions 1–48 (MIGNDRWVTEIETGPVTEARPDTNAREPGDRTPAAPPAATPAATTDQL) are disordered. Residues 19 to 30 (ARPDTNAREPGD) show a composition bias toward basic and acidic residues. Residue Asn91 coordinates ATP. Mg(2+) is bound by residues Arg427 and Arg457. The active-site Phosphohistidine intermediate is His487. Residues Tyr520, Arg620, and His648 each coordinate ATP.

It belongs to the polyphosphate kinase 1 (PPK1) family. The cofactor is Mg(2+). Post-translationally, an intermediate of this reaction is the autophosphorylated ppk in which a phosphate is covalently linked to a histidine residue through a N-P bond.

It carries out the reaction [phosphate](n) + ATP = [phosphate](n+1) + ADP. Catalyzes the reversible transfer of the terminal phosphate of ATP to form a long-chain polyphosphate (polyP). In Mycobacterium marinum (strain ATCC BAA-535 / M), this protein is Polyphosphate kinase.